An 830-amino-acid chain; its full sequence is MTERKREHKDRKQKKNSPKNQSKVTKFLKWFFIGILLLGITAVTVVGIYVLSIIRSSPELDVQAIQSLNQPSILYDDQGNFMDNVITREQRYVVKSEEIPDNLKKAFVAIEDERFYEHKGIDIKRIFGVIASNIKGKLSGSNTVQGASTITQQLIKNAVLTNEVSYERKIKEMYLALELEKHLSKDEILTTYLNTIPMGGYQYGVSAAAQRFFSKNVSDLNLVECAYLGGLTQAPTSYDGLSEANKENPSRYLNRTKSVLFKMHELGYISSEQYNDAINEIDTNGIKFTPNNKLSKTNFEWFTRPAITQVKQDLMNKYKYTQEEVDKLIANGGLKIYTSMDRNLQNNVQKVLDDPNNYKAITNNPNEKNEDGVYKLQASATIIDYKTGHVKALVGGRGEQPAMSHNRAYYDLKSIGSATKPLTVYGPAIDLGLGGAGSVVNDSPLSNKELSSTGYKDQPKNEYNSYRGPLTFREAIKISSNLAAIKVANEVGVSNSIAYGEKLGLVYGPHSRGISTTALGQFQNDPNNPDGGNTYTLASAFGVFGNNGVKTNAKLYTKVLDSHGNVILDTSTPEETKIFSPQASYIVYDMLKDQVESGSAKPAKFGNIPVAGKTGTTTGDKDYLFAGLTPYYSAAIWIGYDKPREMRTSSGTVTSPIFGKIMGLAHKDLQYKEVEQPSGISKIAVCMDSGLKPTSLCTQDPRGSRVYYDWFINGSAPTQYCNYHTNLHVNAPDTNDNNNSGANEGNKQQETKPEEVKPNENNNNKPNEQNPNNKPDNTPANGNNNTNNNGGGNVTPPQNQTENNTNNGVITPPQAGNNQNQNGQNNNITQ.

A compositionally biased stretch (basic residues) spans 1-17; that stretch reads MTERKREHKDRKQKKNS. A disordered region spans residues 1–20; the sequence is MTERKREHKDRKQKKNSPKN. Over 1 to 30 the chain is Cytoplasmic; it reads MTERKREHKDRKQKKNSPKNQSKVTKFLKW. A helical; Signal-anchor for type II membrane protein transmembrane segment spans residues 31 to 51; the sequence is FFIGILLLGITAVTVVGIYVL. The Extracellular segment spans residues 52–830; it reads SIIRSSPELD…QNGQNNNITQ (779 aa). The tract at residues 72 to 244 is transglycosylase; sequence SILYDDQGNF…PTSYDGLSEA (173 aa). Residue Glu111 is the Proton donor; for transglycosylase activity of the active site. The segment at 378 to 663 is transpeptidase; sequence ASATIIDYKT…TSPIFGKIMG (286 aa). Catalysis depends on Ser417, which acts as the Acyl-ester intermediate; for transpeptidase activity. Residues 731–830 are disordered; it reads APDTNDNNNS…QNGQNNNITQ (100 aa). Low complexity predominate over residues 735–746; it reads NDNNNSGANEGN. A compositionally biased stretch (basic and acidic residues) spans 747 to 758; the sequence is KQQETKPEEVKP. Composition is skewed to low complexity over residues 759 to 807 and 816 to 830; these read NENN…NTNN and GNNQ…NITQ.

It in the N-terminal section; belongs to the glycosyltransferase 51 family. In the C-terminal section; belongs to the transpeptidase family.

It is found in the cell membrane. The catalysed reaction is [GlcNAc-(1-&gt;4)-Mur2Ac(oyl-L-Ala-gamma-D-Glu-L-Lys-D-Ala-D-Ala)](n)-di-trans,octa-cis-undecaprenyl diphosphate + beta-D-GlcNAc-(1-&gt;4)-Mur2Ac(oyl-L-Ala-gamma-D-Glu-L-Lys-D-Ala-D-Ala)-di-trans,octa-cis-undecaprenyl diphosphate = [GlcNAc-(1-&gt;4)-Mur2Ac(oyl-L-Ala-gamma-D-Glu-L-Lys-D-Ala-D-Ala)](n+1)-di-trans,octa-cis-undecaprenyl diphosphate + di-trans,octa-cis-undecaprenyl diphosphate + H(+). The enzyme catalyses Preferential cleavage: (Ac)2-L-Lys-D-Ala-|-D-Ala. Also transpeptidation of peptidyl-alanyl moieties that are N-acyl substituents of D-alanine.. Its pathway is cell wall biogenesis; peptidoglycan biosynthesis. Its function is as follows. Cell wall formation. Synthesis of cross-linked peptidoglycan from the lipid intermediates. The enzyme has a penicillin-insensitive transglycosylase N-terminal domain (formation of linear glycan strands) and a penicillin-sensitive transpeptidase C-terminal domain (cross-linking of the peptide subunits). The sequence is that of Penicillin-binding protein 1A (pbpA) from Clostridium perfringens (strain ATCC 13124 / DSM 756 / JCM 1290 / NCIMB 6125 / NCTC 8237 / Type A).